A 1211-amino-acid polypeptide reads, in one-letter code: PH domain-containing protein DDB_G0287875 (1211 aa).

Residues 5–90 (QKKILKVFDQ…YKFFFLNPNG (86 aa)) form the Ras-associating 1 domain. Over residues 103-112 (KSQSASTSGS) the composition is skewed to polar residues. The interval 103 to 133 (KSQSASTSGSAPPKKEPPKPQELQQKQHISK) is disordered. The region spanning 132 to 223 (SKGKSGWLLR…WAQELQATMN (92 aa)) is the PH domain. Calponin-homology (CH) domains lie at 277 to 384 (TTLV…VGYF) and 392 to 502 (FNMR…LSGQ). 2 disordered regions span residues 520 to 941 (VEPE…TESV) and 973 to 1110 (TSAT…PKNT). The stretch at 527-572 (SIRDKQLKLMREKKEEEDRLKKEKEEKEKEEKEKLEKESSAAAAAT) forms a coiled coil. Residues 528–565 (IRDKQLKLMREKKEEEDRLKKEKEEKEKEEKEKLEKES) show a composition bias toward basic and acidic residues. 4 stretches are compositionally biased toward low complexity: residues 566–596 (SAAA…PLKK), 607–646 (PPTV…TLTP), 655–668 (KKPA…KPVA), and 676–691 (PSSS…TTPS). Residues 703–729 (QLEKEKQDRLEKARLEKEKAEKEEQEF) show a composition bias toward basic and acidic residues. Positions 703 to 847 (QLEKEKQDRL…ERKHDENDMD (145 aa)) form a coiled coil. A compositionally biased stretch (low complexity) spans 744 to 753 (LLEQQKQQQE). Basic and acidic residues-rich tracts occupy residues 754 to 778 (GQER…QRQI) and 786 to 853 (EARI…KLLE). Polar residues predominate over residues 862–877 (PTITPPQSLHSSQIIR). A coiled-coil region spans residues 880 to 909 (IEEDDQTNSELEMFQNEYNRLQDEEEHINS). Low complexity-rich tracts occupy residues 914–936 (GSSG…GASS) and 976–1010 (TTSD…TNNN). A compositionally biased stretch (polar residues) spans 1032-1048 (TKEQQSIIDKQTGLVSK). Positions 1048–1076 (KQSTNNESNEQQQQQQQQQQLQQQQSSQN) form a coiled coil. The segment covering 1049–1083 (QSTNNESNEQQQQQQQQQQLQQQQSSQNSTTSIST) has biased composition (low complexity). Over residues 1093 to 1104 (NEEKEKESEPHK) the composition is skewed to basic and acidic residues. Positions 1112–1196 (GRVVVRICLE…DRFVFKKNDI (85 aa)) constitute a Ras-associating 2 domain.

This Dictyostelium discoideum (Social amoeba) protein is PH domain-containing protein DDB_G0287875.